The chain runs to 645 residues: L-aspartate oxidase, chloroplastic (645 aa).

The transit peptide at 1–70 directs the protein to the chloroplast; the sequence is MAALMNGFGS…RMRHKVGSIR (70 aa). FAD contacts are provided by residues 92–95, Lys114, 121–128, and Asp292; these read SGVA and NTNYAQGG. Arg368 (proton donor/acceptor) is an active-site residue. Residues Glu453 and 469–470 each bind FAD; that span reads SL.

This sequence belongs to the FAD-dependent oxidoreductase 2 family. NadB subfamily. FAD is required as a cofactor.

The protein resides in the plastid. The protein localises to the chloroplast. It carries out the reaction L-aspartate + O2 = iminosuccinate + H2O2. It functions in the pathway cofactor biosynthesis; NAD(+) biosynthesis; iminoaspartate from L-aspartate (oxidase route): step 1/1. Functionally, catalyzes the oxidation of L-aspartate to iminoaspartate. This is L-aspartate oxidase, chloroplastic from Oryza sativa subsp. japonica (Rice).